A 186-amino-acid polypeptide reads, in one-letter code: Large ribosomal subunit protein uL5 (186 aa).

It belongs to the universal ribosomal protein uL5 family. In terms of assembly, part of the 50S ribosomal subunit; part of the 5S rRNA/L5/L18/L25 subcomplex. Contacts the 5S rRNA and the P site tRNA. Forms a bridge to the 30S subunit in the 70S ribosome.

Functionally, this is one of the proteins that bind and probably mediate the attachment of the 5S RNA into the large ribosomal subunit, where it forms part of the central protuberance. In the 70S ribosome it contacts protein S13 of the 30S subunit (bridge B1b), connecting the 2 subunits; this bridge is implicated in subunit movement. Contacts the P site tRNA; the 5S rRNA and some of its associated proteins might help stabilize positioning of ribosome-bound tRNAs. This Mycoplasmopsis synoviae (strain 53) (Mycoplasma synoviae) protein is Large ribosomal subunit protein uL5.